We begin with the raw amino-acid sequence, 550 residues long: CTP synthase (550 aa).

Residues 1–271 (MTRYIFITGG…DAEVLDVFGM (271 aa)) are amidoligase domain. Ser-13 contacts CTP. Ser-13 serves as a coordination point for UTP. 14 to 19 (SLGKGL) lines the ATP pocket. Tyr-54 provides a ligand contact to L-glutamine. Position 71 (Asp-71) interacts with ATP. Mg(2+)-binding residues include Asp-71 and Glu-145. CTP is bound by residues 152 to 154 (DIE), 192 to 197 (KTKPTQ), and Lys-228. UTP is bound by residues 192 to 197 (KTKPTQ) and Lys-228. The 253-residue stretch at 297-549 (TIAVVGKYTV…IAAAKEHGRL (253 aa)) folds into the Glutamine amidotransferase type-1 domain. Residue Gly-361 coordinates L-glutamine. Cys-388 functions as the Nucleophile; for glutamine hydrolysis in the catalytic mechanism. L-glutamine is bound by residues 389–392 (FGMQ), Glu-412, and Arg-477. Catalysis depends on residues His-522 and Glu-524.

This sequence belongs to the CTP synthase family. Homotetramer.

It catalyses the reaction UTP + L-glutamine + ATP + H2O = CTP + L-glutamate + ADP + phosphate + 2 H(+). It carries out the reaction L-glutamine + H2O = L-glutamate + NH4(+). The enzyme catalyses UTP + NH4(+) + ATP = CTP + ADP + phosphate + 2 H(+). The protein operates within pyrimidine metabolism; CTP biosynthesis via de novo pathway; CTP from UDP: step 2/2. With respect to regulation, allosterically activated by GTP, when glutamine is the substrate; GTP has no effect on the reaction when ammonia is the substrate. The allosteric effector GTP functions by stabilizing the protein conformation that binds the tetrahedral intermediate(s) formed during glutamine hydrolysis. Inhibited by the product CTP, via allosteric rather than competitive inhibition. Catalyzes the ATP-dependent amination of UTP to CTP with either L-glutamine or ammonia as the source of nitrogen. Regulates intracellular CTP levels through interactions with the four ribonucleotide triphosphates. This is CTP synthase from Caulobacter vibrioides (strain ATCC 19089 / CIP 103742 / CB 15) (Caulobacter crescentus).